The primary structure comprises 575 residues: Septation ring formation regulator EzrA (575 aa).

At 1-8 (MSNGQLIY) the chain is on the extracellular side. A helical membrane pass occupies residues 9–27 (LMVAIAVILVLAYVVAIFL). At 28–575 (RKRNEGRLEA…YEKTRETIRF (548 aa)) the chain is on the cytoplasmic side. 4 coiled-coil regions span residues 105 to 191 (LKAS…FVTL), 265 to 301 (LYEA…LYDI), 354 to 416 (VRRI…IEKD), and 456 to 526 (TASN…IQEA).

Belongs to the EzrA family.

The protein localises to the cell membrane. Functionally, negative regulator of FtsZ ring formation; modulates the frequency and position of FtsZ ring formation. Inhibits FtsZ ring formation at polar sites. Interacts either with FtsZ or with one of its binding partners to promote depolymerization. The chain is Septation ring formation regulator EzrA from Streptococcus pneumoniae serotype 4 (strain ATCC BAA-334 / TIGR4).